Consider the following 221-residue polypeptide: Peroxiredoxin 2 (221 aa).

The Thioredoxin domain occupies 15–170 (PQIGAPAPDF…IIRIIDALQT (156 aa)). Catalysis depends on C56, which acts as the Cysteine sulfenic acid (-SOH) intermediate. R133 provides a ligand contact to substrate. C211 and C217 are oxidised to a cystine.

The protein belongs to the peroxiredoxin family. Prx6 subfamily. As to quaternary structure, homodecamer. Pentamer of dimers that assemble into a ring structure.

Its subcellular location is the cytoplasm. The enzyme catalyses a hydroperoxide + [thioredoxin]-dithiol = an alcohol + [thioredoxin]-disulfide + H2O. Thiol-specific peroxidase that catalyzes the reduction of hydrogen peroxide and organic hydroperoxides to water and alcohols, respectively. Plays a role in cell protection against oxidative stress by detoxifying peroxides. The protein is Peroxiredoxin 2 of Caldanaerobacter subterraneus subsp. tengcongensis (strain DSM 15242 / JCM 11007 / NBRC 100824 / MB4) (Thermoanaerobacter tengcongensis).